A 429-amino-acid chain; its full sequence is Glutamate-1-semialdehyde 2,1-aminomutase (429 aa).

Residue Lys-265 is modified to N6-(pyridoxal phosphate)lysine.

It belongs to the class-III pyridoxal-phosphate-dependent aminotransferase family. HemL subfamily. In terms of assembly, homodimer. Pyridoxal 5'-phosphate is required as a cofactor.

It is found in the cytoplasm. The catalysed reaction is (S)-4-amino-5-oxopentanoate = 5-aminolevulinate. The protein operates within porphyrin-containing compound metabolism; protoporphyrin-IX biosynthesis; 5-aminolevulinate from L-glutamyl-tRNA(Glu): step 2/2. In Legionella pneumophila (strain Corby), this protein is Glutamate-1-semialdehyde 2,1-aminomutase.